The chain runs to 618 residues: uncharacterized protein (618 aa).

The interval 1 to 45 (MSSKSASKLKREAKKAERLAAKGESVKPSKKNGTKNGKDKEVDGV) is disordered. Basic and acidic residues-rich tracts occupy residues 14 to 27 (KKAE…ESVK) and 36 to 45 (NGKDKEVDGV). 2 positions are modified to phosphoserine: serine 50 and serine 53. At threonine 54 the chain carries Phosphothreonine. 2 positions are modified to phosphoserine: serine 55 and serine 64. 2 ABC transporter domains span residues 76–325 (IKID…LKQQ) and 388–609 (IAFN…QSRD). Residues 108 to 115 (GDNGSGKS) and 423 to 430 (GKNGTGKS) each bind ATP.

It belongs to the ABC transporter superfamily.

It is found in the cytoplasm. This is an uncharacterized protein from Schizosaccharomyces pombe (strain 972 / ATCC 24843) (Fission yeast).